The primary structure comprises 196 residues: uncharacterized protein (196 aa).

Its subcellular location is the mitochondrion. This is an uncharacterized protein from Paramecium tetraurelia.